The following is a 607-amino-acid chain: F-box protein At-B (607 aa).

The 39-residue stretch at 9-47 folds into the F-box domain; sequence LAEEILKRLDLENLCSVACVSTTLRSAVVSGVLPSLTSL. LRR repeat units lie at residues 51-76, 77-99, 100-125, 130-155, 228-253, 262-286, 295-320, 321-346, 347-372, 373-397, 398-422, 424-447, 448-477, 478-503, 504-536, and 537-563; these read VFSP…TLNC, LRLN…HLLR, CSLL…TLEM, SPDV…QLNI, LDLI…DLED, DNDL…SLVR, FKRI…RLGG, FPKV…EVRG, AFLL…RLST, CPLI…DLGS, CKSI…NLAG, DVTD…SLRG, CRRV…DLGH, MPGI…SIRS, CFHV…NVHN, and CVSL…GMGQ.

This chain is F-box protein At-B (ATB), found in Arabidopsis thaliana (Mouse-ear cress).